A 142-amino-acid polypeptide reads, in one-letter code: Large ribosomal subunit protein uL13 (142 aa).

This sequence belongs to the universal ribosomal protein uL13 family. In terms of assembly, part of the 50S ribosomal subunit.

In terms of biological role, this protein is one of the early assembly proteins of the 50S ribosomal subunit, although it is not seen to bind rRNA by itself. It is important during the early stages of 50S assembly. This chain is Large ribosomal subunit protein uL13, found in Cronobacter sakazakii (strain ATCC BAA-894) (Enterobacter sakazakii).